A 299-amino-acid chain; its full sequence is Caspase-1 (299 aa).

Residues 1-28 (MLDGKQDNGNVDSVDIKQRTNGGGDEGD) constitute a propeptide that is removed on maturation. The disordered stretch occupies residues 1–45 (MLDGKQDNGNVDSVDIKQRTNGGGDEGDALGSNSSSQPNRVARMP). Active-site residues include histidine 136 and cysteine 178. Residues 185-195 (GGITLSRTETD) constitute a propeptide that is removed on maturation.

The protein belongs to the peptidase C14A family. As to quaternary structure, heterotetramer that consists of two anti-parallel arranged heterodimers, each one formed by a 19/18 kDa (p19/18) and a 12 kDa (p12) subunit. In terms of processing, the two subunits are derived from the precursor sequence by an autocatalytic mechanism.

Its function is as follows. Involved in the activation cascade of caspases responsible for apoptosis execution. Inhibited by the baculovirus anti-apoptotic protein p35. Cleaves p35 and nuclear immunophilin FKBP46. In Spodoptera frugiperda (Fall armyworm), this protein is Caspase-1.